We begin with the raw amino-acid sequence, 417 residues long: Gamma-glutamyl phosphate reductase (417 aa).

This sequence belongs to the gamma-glutamyl phosphate reductase family.

It localises to the cytoplasm. The enzyme catalyses L-glutamate 5-semialdehyde + phosphate + NADP(+) = L-glutamyl 5-phosphate + NADPH + H(+). The protein operates within amino-acid biosynthesis; L-proline biosynthesis; L-glutamate 5-semialdehyde from L-glutamate: step 2/2. Functionally, catalyzes the NADPH-dependent reduction of L-glutamate 5-phosphate into L-glutamate 5-semialdehyde and phosphate. The product spontaneously undergoes cyclization to form 1-pyrroline-5-carboxylate. This chain is Gamma-glutamyl phosphate reductase, found in Proteus mirabilis (strain HI4320).